We begin with the raw amino-acid sequence, 134 residues long: Sec-independent protein translocase protein TatB (134 aa).

Residues 2–22 (FDGIGFMELLLIGILGLVVLG) traverse the membrane as a helical segment. A disordered region spans residues 90 to 134 (AESVNRPYKVEDTSPVAPKASPDESPSVVEAKSSEATSENSSTPK). Residues 123 to 134 (SEATSENSSTPK) show a composition bias toward polar residues.

The protein belongs to the TatB family. The Tat system comprises two distinct complexes: a TatABC complex, containing multiple copies of TatA, TatB and TatC subunits, and a separate TatA complex, containing only TatA subunits. Substrates initially bind to the TatABC complex, which probably triggers association of the separate TatA complex to form the active translocon.

Its subcellular location is the cell inner membrane. Part of the twin-arginine translocation (Tat) system that transports large folded proteins containing a characteristic twin-arginine motif in their signal peptide across membranes. Together with TatC, TatB is part of a receptor directly interacting with Tat signal peptides. TatB may form an oligomeric binding site that transiently accommodates folded Tat precursor proteins before their translocation. In Shewanella frigidimarina (strain NCIMB 400), this protein is Sec-independent protein translocase protein TatB.